A 226-amino-acid polypeptide reads, in one-letter code: Nucleoside triphosphate pyrophosphatase (226 aa).

Asp-79 functions as the Proton acceptor in the catalytic mechanism. Positions Trp-204–Ala-226 are disordered. A compositionally biased stretch (polar residues) spans Arg-206 to Pro-220.

The protein belongs to the Maf family. It depends on a divalent metal cation as a cofactor.

It localises to the cytoplasm. The enzyme catalyses a ribonucleoside 5'-triphosphate + H2O = a ribonucleoside 5'-phosphate + diphosphate + H(+). It catalyses the reaction a 2'-deoxyribonucleoside 5'-triphosphate + H2O = a 2'-deoxyribonucleoside 5'-phosphate + diphosphate + H(+). Nucleoside triphosphate pyrophosphatase. May have a dual role in cell division arrest and in preventing the incorporation of modified nucleotides into cellular nucleic acids. The chain is Nucleoside triphosphate pyrophosphatase from Salinispora tropica (strain ATCC BAA-916 / DSM 44818 / JCM 13857 / NBRC 105044 / CNB-440).